Reading from the N-terminus, the 318-residue chain is Aspartate carbamoyltransferase catalytic subunit (318 aa).

Arg58 and Thr59 together coordinate carbamoyl phosphate. Lys86 is a binding site for L-aspartate. Residues Arg108, His141, and Gln144 each coordinate carbamoyl phosphate. Arg174 and Arg226 together coordinate L-aspartate. Carbamoyl phosphate-binding residues include Gly270 and Pro271.

This sequence belongs to the aspartate/ornithine carbamoyltransferase superfamily. ATCase family. As to quaternary structure, heterododecamer (2C3:3R2) of six catalytic PyrB chains organized as two trimers (C3), and six regulatory PyrI chains organized as three dimers (R2).

It carries out the reaction carbamoyl phosphate + L-aspartate = N-carbamoyl-L-aspartate + phosphate + H(+). It functions in the pathway pyrimidine metabolism; UMP biosynthesis via de novo pathway; (S)-dihydroorotate from bicarbonate: step 2/3. Catalyzes the condensation of carbamoyl phosphate and aspartate to form carbamoyl aspartate and inorganic phosphate, the committed step in the de novo pyrimidine nucleotide biosynthesis pathway. This Lactobacillus gasseri (strain ATCC 33323 / DSM 20243 / BCRC 14619 / CIP 102991 / JCM 1131 / KCTC 3163 / NCIMB 11718 / NCTC 13722 / AM63) protein is Aspartate carbamoyltransferase catalytic subunit.